A 287-amino-acid chain; its full sequence is Survival motor neuron protein (287 aa).

Residues 1 to 27 (MGGGGGLPEPEDSVLFRRGTGQSDDSD) are disordered. Residues 8 to 39 (PEPEDSVLFRRGTGQSDDSDIWDDTALIKAYD) form a P1 (binding site for GEMIN2) region. T20 is subject to Phosphothreonine. 2 positions are modified to phosphoserine: S23 and S26. K46 is covalently cross-linked (Glycyl lysine isopeptide (Lys-Gly) (interchain with G-Cter in SUMO2)). The disordered stretch occupies residues 52–83 (GDISEASDKPKSTPKRKPAKKNKSQKKNATTA). Positions 63-77 (STPKRKPAKKNKSQK) are enriched in basic residues. Phosphothreonine is present on T64. A Tudor domain is found at 86–146 (QWKVGDKCSA…LSPACEVANN (61 aa)). Residues 92 to 205 (KCSAVWSEDG…MSGSGLGPGK (114 aa)) form a required for interaction with RPP20/POP7 region. Residues 148 to 216 (EQDTQENENE…GVKFSGPPPP (69 aa)) are disordered. The segment covering 157–180 (ESQISTDESENSSRSPGNKPNNIK) has biased composition (polar residues). K205 is covalently cross-linked (Glycyl lysine isopeptide (Lys-Gly) (interchain with G-Cter in SUMO2)). Residues 234–261 (PPIIPPPPPICPDSLDDADALGSMLISW) are P2 (binding site for SM B). Positions 273–287 (GFKQNQKEGRCSHFN) are required for interaction with SYNCRIP.

The protein belongs to the SMN family. Homooligomer; may form higher order homooligomers in the dimer to octamer range. Part of the core SMN complex that contains SMN1, GEMIN2/SIP1, DDX20/GEMIN3, GEMIN4, GEMIN5, GEMIN6, GEMIN7, GEMIN8 and STRAP/UNRIP. Part of the SMN-Sm complex that contains SMN1, GEMIN2/SIP1, DDX20/GEMIN3, GEMIN4, GEMIN5, GEMIN6, GEMIN7, GEMIN8, STRAP/UNRIP and the Sm proteins SNRPB, SNRPD1, SNRPD2, SNRPD3, SNRPE, SNRPF and SNRPG. Component of an import snRNP complex composed of KPNB1, RNUT1, SMN1 and ZNF259. Interacts with DDX20, FBL, NOLA1, RNUT1, SYNCRIP and with several spliceosomal snRNP core Sm proteins, including SNRPB, SNRPD1, SNRPD2, SNRPD3, SNRPE and ILF3. Interacts with GEMIN2; the interaction is direct. Interacts with GEMIN3; the interaction is direct. Interacts with GEMIN8; the interaction is direct. Interacts with SNRPB; the interaction is direct. Interacts (via Tudor domain) with SNRPD1 (via C-terminus); the interaction is direct. Interacts with SNRPD2; the interaction is direct. Interacts (via Tudor domain) with SNRPD3 (via C-terminus); the interaction is direct. Interacts with SNRPE; the interaction is direct. Interacts with OSTF1, LSM10, LSM11 and RPP20/POP7. Interacts (via C-terminal region) with ZPR1 (via C-terminal region). Interacts (via Tudor domain) with COIL. Interacts with SETX; recruits SETX to POLR2A. Interacts with POLR2A (via the C-terminal domain (CTD)). Interacts with PRMT5. Interacts with XRN2. Interacts (via C-terminus) with FMR1 (via C-terminus); the interaction is direct and occurs in a RNA-independent manner. Interacts (via Tudor domain) with SF3B2 ('Arg-508'-methylated form). Interacts with WRAP53/TCAB1. Interacts (via Tudor domain) with ELAVL4 in an RNA-independent manner; the interaction is required for localization of ELAVL4 to RNA granules. Interacts with FRG1.

The protein localises to the nucleus. It localises to the gem. The protein resides in the cajal body. Its subcellular location is the cytoplasm. It is found in the cytoplasmic granule. The protein localises to the perikaryon. It localises to the cell projection. The protein resides in the neuron projection. Its subcellular location is the axon. It is found in the myofibril. The protein localises to the sarcomere. It localises to the z line. Functionally, the SMN complex catalyzes the assembly of small nuclear ribonucleoproteins (snRNPs), the building blocks of the spliceosome, and thereby plays an important role in the splicing of cellular pre-mRNAs. Most spliceosomal snRNPs contain a common set of Sm proteins SNRPB, SNRPD1, SNRPD2, SNRPD3, SNRPE, SNRPF and SNRPG that assemble in a heptameric protein ring on the Sm site of the small nuclear RNA to form the core snRNP (Sm core). In the cytosol, the Sm proteins SNRPD1, SNRPD2, SNRPE, SNRPF and SNRPG are trapped in an inactive 6S pICln-Sm complex by the chaperone CLNS1A that controls the assembly of the core snRNP. To assemble core snRNPs, the SMN complex accepts the trapped 5Sm proteins from CLNS1A forming an intermediate. Binding of snRNA inside 5Sm ultimately triggers eviction of the SMN complex, thereby allowing binding of SNRPD3 and SNRPB to complete assembly of the core snRNP. Within the SMN complex, SMN1 acts as a structural backbone and together with GEMIN2 it gathers the Sm complex subunits. Ensures the correct splicing of U12 intron-containing genes that may be important for normal motor and proprioceptive neurons development. Also required for resolving RNA-DNA hybrids created by RNA polymerase II, that form R-loop in transcription terminal regions, an important step in proper transcription termination. May also play a role in the metabolism of small nucleolar ribonucleoprotein (snoRNPs). The sequence is that of Survival motor neuron protein (SMN1) from Canis lupus familiaris (Dog).